The sequence spans 493 residues: Leucine-rich repeat-containing protein 14 (493 aa).

One copy of the LRR 1; degenerate repeat lies at 111–146 (KHALRVLDMTGLLDDGVEQDPETMSMWDCTAAVART). The LRR 2; degenerate repeat unit spans residues 194 to 218 (RLCCRDLRAEDLPMRNTVALLQLLD). Residues 219–246 (AGCLRRIDLRFNNLGLRGLSVIIPHVAR) form an LRR 3; degenerate repeat. One copy of the LRR 4; degenerate repeat lies at 247–282 (FQHLASLRLHYVHGDSRQPSVDGEDNFRYFLAQMGR). LRR repeat units follow at residues 283–307 (FMCL…LSTL), 308–339 (QRPL…AHLK), 340–360 (KLDL…QGLL), 364–391 (ATTL…TLTR), and 392–416 (CASL…LLRD).

Belongs to the PRAME family. LRRC14 subfamily. Interacts with IKBKB; disrupts IKBKB-IKBKG interaction preventing I-kappa-B-kinase (IKK) core complex formation and leading to a decrease of IKBKB phosphorylation and NF-kappaB activation. Interacts with CHUK.

The protein localises to the cytoplasm. Its function is as follows. Negatively regulates Toll-like receptor-mediated NF-kappa-B signaling by disrupting IKK core complex formation through interaction with IKBKB. The chain is Leucine-rich repeat-containing protein 14 from Mus musculus (Mouse).